Consider the following 293-residue polypeptide: MNIRGAPDLGQPSDDPSSGGERERIRQRMKMVIGQLEGILRELKEVAKELREVVSQIDKLTSDFDFELEPDDWTTATVSSTSSSDKAGMGGPFDLGHLDFMTADILSDSWEFCSFLDVSTPSDSVDGPESTRPGAGPDYRLMNGGTPIPNGPRVETPDSSSEEAFGAGPTVKSQLPQRTPGTRERVRFSDKVLYHALCCDDEEGDGEQEVEEEEVGLPPEPAHTEAHAGPHKPSPAPYKSRRSPLTSRHSGSTLAPEQTRRVTRNSSTQTVSDKSTQTVLPYTATRQKARGKN.

The disordered stretch occupies residues 1-26; that stretch reads MNIRGAPDLGQPSDDPSSGGERERIR. Positions 30-63 form a coiled coil; it reads KMVIGQLEGILRELKEVAKELREVVSQIDKLTSD. Disordered stretches follow at residues 120-186 and 200-293; these read TPSD…RERV and DDEE…RGKN. The segment covering 171-180 has biased composition (polar residues); that stretch reads VKSQLPQRTP. Residues 200–215 show a composition bias toward acidic residues; sequence DDEEGDGEQEVEEEEV. Composition is skewed to polar residues over residues 243–256 and 264–286; these read SPLT…TLAP and RNSS…TATR.

Belongs to the INSYN1 family. In terms of assembly, interacts with GPHN.

Its subcellular location is the postsynaptic density. In terms of biological role, component of the protein machinery at the inhibitory synapses, probably acting as a scaffold. Inhibitory synapses dampen neuronal activity through postsynaptic hyperpolarization. This synaptic inhibition is fundamental for the functioning of the central nervous system, shaping and orchestrating the flow of information through neuronal networks to generate a precise neural code. In Homo sapiens (Human), this protein is Inhibitory synaptic factor 1.